The chain runs to 357 residues: Sulfate/thiosulfate import ATP-binding protein CysA (357 aa).

The ABC transporter domain occupies 3 to 237 (IQIQGVSKQY…PASPFVYDFL (235 aa)). 35–42 (GPSGSGKT) serves as a coordination point for ATP.

The protein belongs to the ABC transporter superfamily. Sulfate/tungstate importer (TC 3.A.1.6) family. The complex is composed of two ATP-binding proteins (CysA), two transmembrane proteins (CysT and CysW) and a solute-binding protein (CysP).

Its subcellular location is the cell membrane. The enzyme catalyses sulfate(out) + ATP + H2O = sulfate(in) + ADP + phosphate + H(+). It catalyses the reaction thiosulfate(out) + ATP + H2O = thiosulfate(in) + ADP + phosphate + H(+). Its function is as follows. Part of the ABC transporter complex CysAWTP involved in sulfate/thiosulfate import. Responsible for energy coupling to the transport system. The protein is Sulfate/thiosulfate import ATP-binding protein CysA of Bacillus cereus (strain ATCC 10987 / NRS 248).